The primary structure comprises 106 residues: Ribulose bisphosphate carboxylase small subunit (106 aa).

Belongs to the RuBisCO small chain family. Heterohexadecamer of 8 large and 8 small subunits.

It localises to the plastid. It is found in the cyanelle. Functionally, ruBisCO catalyzes two reactions: the carboxylation of D-ribulose 1,5-bisphosphate, the primary event in carbon dioxide fixation, as well as the oxidative fragmentation of the pentose substrate. Both reactions occur simultaneously and in competition at the same active site. Although the small subunit is not catalytic it is essential for maximal activity. This chain is Ribulose bisphosphate carboxylase small subunit, found in Cyanophora paradoxa.